Consider the following 460-residue polypeptide: MTNYAIILAAGKGTRMTSDLPKVLHKVSGLTMLEHVFRSVKAISPEKSVTVIGHKSEMVRAVLADQSAFVHQTEQLGTGHAVMMAETQLEGLEGHTLVIAGDTPLITGESLKSLIDFHVNHKNVATILTATAPDPFGYGRIVRNKDGEVIKIVEQKDANEYEQQLKEINTGTYVFDNKRLFEALKCITTNNAQGEYYLTDVVAIFRANKEKVGAYILRDFNESLGVNDRVALATAETVMRQRITQKHMVNGVTFQNPETVYIESDVEIAPDVLIEGNVTLKGRTHIGSGTVLTNGTYIVDSEIGQGSIITNSMIESSVLAAGVTVGPYAHLRPGTTLDREVHIGNFVEVKDSHIGEKTKAGHLTYIGNAQVGSSVNVGAGTITVNYDGQNKYETVIGDHAFIGSNSTLIAPLEVGDNALTAAGSTISKTVPADSIVIGRSRQVTKEGYAKRLAHHPSRSK.

The segment at 1–229 (MTNYAIILAA…FNESLGVNDR (229 aa)) is pyrophosphorylase. Residues 8–11 (LAAG), K22, Q72, and 77–78 (GT) contribute to the UDP-N-acetyl-alpha-D-glucosamine site. Position 102 (D102) interacts with Mg(2+). Residues G139, E154, N169, and N227 each contribute to the UDP-N-acetyl-alpha-D-glucosamine site. N227 is a binding site for Mg(2+). The linker stretch occupies residues 230-250 (VALATAETVMRQRITQKHMVN). An N-acetyltransferase region spans residues 251–460 (GVTFQNPETV…RLAHHPSRSK (210 aa)). Residues R332 and K350 each coordinate UDP-N-acetyl-alpha-D-glucosamine. H362 functions as the Proton acceptor in the catalytic mechanism. 2 residues coordinate UDP-N-acetyl-alpha-D-glucosamine: Y365 and N376. Acetyl-CoA contacts are provided by residues A379, 385–386 (NY), S404, A422, and R439.

The protein in the N-terminal section; belongs to the N-acetylglucosamine-1-phosphate uridyltransferase family. In the C-terminal section; belongs to the transferase hexapeptide repeat family. As to quaternary structure, homotrimer. Mg(2+) is required as a cofactor.

Its subcellular location is the cytoplasm. The catalysed reaction is alpha-D-glucosamine 1-phosphate + acetyl-CoA = N-acetyl-alpha-D-glucosamine 1-phosphate + CoA + H(+). It carries out the reaction N-acetyl-alpha-D-glucosamine 1-phosphate + UTP + H(+) = UDP-N-acetyl-alpha-D-glucosamine + diphosphate. It participates in nucleotide-sugar biosynthesis; UDP-N-acetyl-alpha-D-glucosamine biosynthesis; N-acetyl-alpha-D-glucosamine 1-phosphate from alpha-D-glucosamine 6-phosphate (route II): step 2/2. Its pathway is nucleotide-sugar biosynthesis; UDP-N-acetyl-alpha-D-glucosamine biosynthesis; UDP-N-acetyl-alpha-D-glucosamine from N-acetyl-alpha-D-glucosamine 1-phosphate: step 1/1. It functions in the pathway bacterial outer membrane biogenesis; LPS lipid A biosynthesis. Its function is as follows. Catalyzes the last two sequential reactions in the de novo biosynthetic pathway for UDP-N-acetylglucosamine (UDP-GlcNAc). The C-terminal domain catalyzes the transfer of acetyl group from acetyl coenzyme A to glucosamine-1-phosphate (GlcN-1-P) to produce N-acetylglucosamine-1-phosphate (GlcNAc-1-P), which is converted into UDP-GlcNAc by the transfer of uridine 5-monophosphate (from uridine 5-triphosphate), a reaction catalyzed by the N-terminal domain. The polypeptide is Bifunctional protein GlmU (Streptococcus pyogenes serotype M18 (strain MGAS8232)).